A 329-amino-acid polypeptide reads, in one-letter code: MAAPPRKVFVWEDGTPMRFYIRPGMAKLRLAPLLLAGGAGLCRVQEPGAVHLVQPGEPAPDGAVSTDYVVACVESQRRLPLDLYRHSGPAPLAASPRGRLPFTEAEDAALLRAVRERSGAPRVSGTALWKELECTGLTRHSWQAMRDRYLRHLRPLHRESQQTEEAAAPMGIFEAANREFESSESGSDTSDTPDELPLQNGEGTFPLEAASGLQTGLDDCALPAAQGENKQTNTFSDSSKAEEAAQIIQHFMEEFHTDLLTVTQALLKNSGEVEATSYYLHAGQRLDGYPVWSREDDLELQKDDEDVRSKLIAKFGAENVARRVAFRKS.

Positions 63 to 86 (AVSTDYVVACVESQRRLPLDLYRH) constitute a BRCT domain. The region spanning 94-153 (ASPRGRLPFTEAEDAALLRAVRERSGAPRVSGTALWKELECTGLTRHSWQAMRDRYLRHL) is the Myb-like domain. The disordered stretch occupies residues 179-206 (EFESSESGSDTSDTPDELPLQNGEGTFP). The Nuclear localization signal motif lies at 313–329 (AKFGAENVARRVAFRKS).

The protein belongs to the RAP1 family. As to quaternary structure, homodimer. Component of the shelterin complex (telosome). Interacts with terf2; the interaction is direct.

It is found in the nucleus. The protein localises to the chromosome. It localises to the telomere. Acts both as a regulator of telomere function and as a transcription regulator. Involved in the regulation of telomere length and protection as a component of the shelterin complex (telosome). Does not bind DNA directly: recruited to telomeric double-stranded 5'-TTAGGG-3' repeats via its interaction with terf2. Independently of its function in telomeres, also acts as a transcription regulator: recruited to extratelomeric 5'-TTAGGG-3' sites via its association with terf2 or other factors, and regulates gene expression. The polypeptide is Telomeric repeat-binding factor 2-interacting protein 1 (TERF2IP) (Gallus gallus (Chicken)).